A 372-amino-acid chain; its full sequence is tRNA-specific 2-thiouridylase MnmA (372 aa).

Residues 6–13 (AMSGGVDS) and leucine 32 contribute to the ATP site. Residue cysteine 101 is the Nucleophile of the active site. The cysteines at positions 101 and 193 are disulfide-linked. Glycine 125 is an ATP binding site. The segment at 143-145 (KDQ) is interaction with tRNA. Cysteine 193 serves as the catalytic Cysteine persulfide intermediate.

This sequence belongs to the MnmA/TRMU family.

It localises to the cytoplasm. It catalyses the reaction S-sulfanyl-L-cysteinyl-[protein] + uridine(34) in tRNA + AH2 + ATP = 2-thiouridine(34) in tRNA + L-cysteinyl-[protein] + A + AMP + diphosphate + H(+). Functionally, catalyzes the 2-thiolation of uridine at the wobble position (U34) of tRNA, leading to the formation of s(2)U34. This Corynebacterium kroppenstedtii (strain DSM 44385 / JCM 11950 / CIP 105744 / CCUG 35717) protein is tRNA-specific 2-thiouridylase MnmA.